Here is a 349-residue protein sequence, read N- to C-terminus: UDP-N-acetylenolpyruvoylglucosamine reductase (349 aa).

The FAD-binding PCMH-type domain maps to 26 to 197 (FDARARVAAR…VAVTFRLPKA (172 aa)). Arg-173 is an active-site residue. Residue Ser-249 is the Proton donor of the active site. Glu-345 is a catalytic residue.

It belongs to the MurB family. It depends on FAD as a cofactor.

It localises to the cytoplasm. It catalyses the reaction UDP-N-acetyl-alpha-D-muramate + NADP(+) = UDP-N-acetyl-3-O-(1-carboxyvinyl)-alpha-D-glucosamine + NADPH + H(+). The protein operates within cell wall biogenesis; peptidoglycan biosynthesis. Functionally, cell wall formation. This Burkholderia pseudomallei (strain K96243) protein is UDP-N-acetylenolpyruvoylglucosamine reductase.